Here is a 136-residue protein sequence, read N- to C-terminus: Large ribosomal subunit protein uL16 (136 aa).

It belongs to the universal ribosomal protein uL16 family. In terms of assembly, part of the 50S ribosomal subunit.

In terms of biological role, binds 23S rRNA and is also seen to make contacts with the A and possibly P site tRNAs. This Aggregatibacter actinomycetemcomitans (Actinobacillus actinomycetemcomitans) protein is Large ribosomal subunit protein uL16.